A 224-amino-acid chain; its full sequence is MSSYFVNSTFPVTLASGQESFLGQLPLYSSGYADPLRHYPAPYGPGPGQDKGFAASSYYPPAGGGYGRAAPCDYGPAPAFYREKDAACALSGADEPPPFHPEPRKSDCAQDKSVFGETEEQKCSTPVYPWMQRMNSCNSSSFGPSGRRGRQTYTRYQTLELEKEFHYNRYLTRRRRIEIAHALCLTERQIKIWFQNRRMKWKKESKLLSASQLSAEEEEEKPAE.

The Antp-type hexapeptide signature appears at 127-132; it reads VYPWMQ. Residues 146–205 constitute a DNA-binding region (homeobox); it reads GRRGRQTYTRYQTLELEKEFHYNRYLTRRRRIEIAHALCLTERQIKIWFQNRRMKWKKES. Ser-214 bears the Phosphoserine mark.

It belongs to the Antp homeobox family.

It is found in the nucleus. In terms of biological role, sequence-specific transcription factor which is part of a developmental regulatory system that provides cells with specific positional identities on the anterior-posterior axis. The polypeptide is Homeobox protein Hox-B6 (Hoxb6) (Mus musculus (Mouse)).